The sequence spans 337 residues: Methionyl-tRNA formyltransferase (337 aa).

116–119 (SILP) lines the (6S)-5,6,7,8-tetrahydrofolate pocket.

It belongs to the Fmt family.

It catalyses the reaction L-methionyl-tRNA(fMet) + (6R)-10-formyltetrahydrofolate = N-formyl-L-methionyl-tRNA(fMet) + (6S)-5,6,7,8-tetrahydrofolate + H(+). Functionally, attaches a formyl group to the free amino group of methionyl-tRNA(fMet). The formyl group appears to play a dual role in the initiator identity of N-formylmethionyl-tRNA by promoting its recognition by IF2 and preventing the misappropriation of this tRNA by the elongation apparatus. The sequence is that of Methionyl-tRNA formyltransferase from Desulfovibrio desulfuricans (strain ATCC 27774 / DSM 6949 / MB).